The chain runs to 937 residues: Outer membrane usher protein CS3-2 (937 aa).

This sequence belongs to the fimbrial export usher family. Post-translationally, a 97 kDa form of the protein is thought to be due to post-translational processing of isoform 104 kDa.

It is found in the cell outer membrane. Functionally, these proteins are essential for the biogenesis of mature CS3 pili, but not for synthesis of the CS3 pilin subunit. This chain is Outer membrane usher protein CS3-2, found in Escherichia coli.